We begin with the raw amino-acid sequence, 250 residues long: 3alpha-hydroxysteroid dehydrogenase (250 aa).

Residues N93, Y158, and K162 each coordinate NADP(+). Y158 serves as the catalytic Proton acceptor.

This sequence belongs to the short-chain dehydrogenases/reductases (SDR) family.

It catalyses the reaction lithocholate + NADP(+) = 3-oxo-5beta-cholan-24-oate + NADPH + H(+). The catalysed reaction is deoxycholate + NADP(+) = 12alpha-hydroxy-3-oxo-5beta-cholan-24-oate + NADPH + H(+). The enzyme catalyses deoxycholate + NAD(+) = 12alpha-hydroxy-3-oxo-5beta-cholan-24-oate + NADH + H(+). It carries out the reaction cholate + NADP(+) = 7alpha,12alpha-dihydroxy-3-oxo-5beta-cholan-24-oate + NADPH + H(+). It catalyses the reaction chenodeoxycholate + NADP(+) = 3-oxochenodeoxycholate + NADPH + H(+). In terms of biological role, involved in the modification of secondary bile acids into iso-bile acids (3beta-bile acids) via epimerization of the 3-OH group through a 3-oxo-intermediate. Catalyzes the oxidation of deoxycholate (DCA) and lithocholate (LCA) to yield 12-alpha-hydroxy-3-oxo-5-beta-cholan-24-oate (3-oxo-DCA) and 3-oxo-5-beta-cholan-24-oate (3-oxo-LCA), respectively. Is also able to catalyze the oxidation of cholate (CA) and chenodeoxycholate (CDCA) into 3-dehydrocholate (3-oxo-CA) and 7-alpha-hydroxy-3-oxo-5-beta-cholan-24-oate (3-oxo-CDCA), respectively. Can also catalyze the reverse reactions in vitro. Accepts both NADPH and NADH as cosubstrates. The conversion of the abundant bile acid DCA into isoDCA by the gut bacterium R.gnavus favors the growth of the keystone commensal genus Bacteroides, since isoDCA is less cytotoxic than its parent compound, DCA; iso-bile acids have thus a potential role in modulating gut community composition. The sequence is that of 3alpha-hydroxysteroid dehydrogenase from Mediterraneibacter gnavus (strain ATCC 29149 / DSM 114966 / JCM 6515 / VPI C7-9) (Ruminococcus gnavus).